The sequence spans 214 residues: STS14 protein (214 aa).

The signal sequence occupies residues M1–Y19. Repeat copies occupy residues Y13–I14, Y15–I16, and Y17–I18. Residues Y13–I18 are 3 X 2 AA tandem repeats of Y-I. Residues L80 to C200 form the SCP domain.

The protein belongs to the CRISP family. Highly expressed in the stigma and stylar cortex throughout pistil development. Not expressed in other organs.

In terms of biological role, may protect the outer tissues of the pistil from pathogen attack. The sequence is that of STS14 protein (STS14) from Solanum tuberosum (Potato).